Reading from the N-terminus, the 456-residue chain is Asparagine--tRNA ligase (456 aa).

The protein belongs to the class-II aminoacyl-tRNA synthetase family. Homodimer.

Its subcellular location is the cytoplasm. It catalyses the reaction tRNA(Asn) + L-asparagine + ATP = L-asparaginyl-tRNA(Asn) + AMP + diphosphate + H(+). This Mycoplasmoides gallisepticum (strain R(low / passage 15 / clone 2)) (Mycoplasma gallisepticum) protein is Asparagine--tRNA ligase.